The primary structure comprises 363 residues: 3-dehydroquinate synthase (363 aa).

Residues 71–76 (DGEQYK), 105–109 (GVIGD), 129–130 (TT), Lys142, Lys151, and 169–172 (CLKT) each bind NAD(+). Zn(2+) is bound by residues Glu184, His247, and His264.

It belongs to the sugar phosphate cyclases superfamily. Dehydroquinate synthase family. It depends on NAD(+) as a cofactor. The cofactor is Co(2+). Zn(2+) serves as cofactor.

Its subcellular location is the cytoplasm. It carries out the reaction 7-phospho-2-dehydro-3-deoxy-D-arabino-heptonate = 3-dehydroquinate + phosphate. It functions in the pathway metabolic intermediate biosynthesis; chorismate biosynthesis; chorismate from D-erythrose 4-phosphate and phosphoenolpyruvate: step 2/7. Catalyzes the conversion of 3-deoxy-D-arabino-heptulosonate 7-phosphate (DAHP) to dehydroquinate (DHQ). This chain is 3-dehydroquinate synthase, found in Vibrio vulnificus (strain CMCP6).